Here is a 207-residue protein sequence, read N- to C-terminus: MARYTGASCRQCRREGMKLFLKGDRCYTDKCAIVKRNYAPGQHGQGRKKVSNYGLQLREKQKVKRIYGVLETQFRNLYERAENMPGKAGENLLSLLERRLDNVVYRMGLASSRKEARQLVTHGHFTLNGNKVDIPSLIVKVGDVIEVKEKSRSSAKFKNLVEVNSRIAPKWLEANVEGMTAKVVGVPTREDIDLEIAEHLIIELYSK.

In terms of domain architecture, S4 RNA-binding spans Arg98–Asn164.

Belongs to the universal ribosomal protein uS4 family. As to quaternary structure, part of the 30S ribosomal subunit. Contacts protein S5. The interaction surface between S4 and S5 is involved in control of translational fidelity.

One of the primary rRNA binding proteins, it binds directly to 16S rRNA where it nucleates assembly of the body of the 30S subunit. In terms of biological role, with S5 and S12 plays an important role in translational accuracy. In Clostridioides difficile (strain 630) (Peptoclostridium difficile), this protein is Small ribosomal subunit protein uS4.